The following is a 287-amino-acid chain: Shikimate dehydrogenase (NADP(+)) (287 aa).

Shikimate-binding positions include 20–22 (SRS) and T67. The active-site Proton acceptor is K71. Residue E84 coordinates NADP(+). N93 and D108 together coordinate shikimate. NADP(+)-binding positions include 132-136 (GAGGA), 156-161 (NRTAAR), and M226. Y228 lines the shikimate pocket. G250 is an NADP(+) binding site.

The protein belongs to the shikimate dehydrogenase family. In terms of assembly, homodimer.

The enzyme catalyses shikimate + NADP(+) = 3-dehydroshikimate + NADPH + H(+). Its pathway is metabolic intermediate biosynthesis; chorismate biosynthesis; chorismate from D-erythrose 4-phosphate and phosphoenolpyruvate: step 4/7. In terms of biological role, involved in the biosynthesis of the chorismate, which leads to the biosynthesis of aromatic amino acids. Catalyzes the reversible NADPH linked reduction of 3-dehydroshikimate (DHSA) to yield shikimate (SA). The protein is Shikimate dehydrogenase (NADP(+)) of Bordetella bronchiseptica (strain ATCC BAA-588 / NCTC 13252 / RB50) (Alcaligenes bronchisepticus).